The primary structure comprises 394 residues: MTQLETRTEPMVVNFGPHHPSMHGVLRLVVTLDGEDVVDCEPVIGYLHRGMEKIAENRTNVMYVPYVSRMDYAAGMFYEAIVVNAPERLANIPVPKRASYIRVLMLELNRIANHLLWLGPFLADVGAQTPFFYIFREREMIYDLWEAATGQRLINNNYFRIGGVAADLPWGWLEKCKDFCDWFGPKIDEYEKLITNNPIFRRRIEGLGVIGREEAINWSLSGPMLRASGVPWDLRKVDHYECYDDFDWDVASEKEGDCFARYRVRIEEMRQSLKILRQACDMIPGGPTENLEAHRMAEGKDSAFAGFDYQYVAKKVAPTFKIPNGELYSRLESGKGEIGVFIQGNNDVTPWRFKIRAADSNNLQILPHILKGHKVADIMAILGSIDVIMGSVDR.

The protein belongs to the complex I 49 kDa subunit family. NDH-1 can be composed of about 15 different subunits; different subcomplexes with different compositions have been identified which probably have different functions.

The protein localises to the cellular thylakoid membrane. It catalyses the reaction a plastoquinone + NADH + (n+1) H(+)(in) = a plastoquinol + NAD(+) + n H(+)(out). The catalysed reaction is a plastoquinone + NADPH + (n+1) H(+)(in) = a plastoquinol + NADP(+) + n H(+)(out). NDH-1 shuttles electrons from an unknown electron donor, via FMN and iron-sulfur (Fe-S) centers, to quinones in the respiratory and/or the photosynthetic chain. The immediate electron acceptor for the enzyme in this species is believed to be plastoquinone. Couples the redox reaction to proton translocation, and thus conserves the redox energy in a proton gradient. Cyanobacterial NDH-1 also plays a role in inorganic carbon-concentration. The chain is NAD(P)H-quinone oxidoreductase subunit H from Synechococcus sp. (strain CC9311).